The sequence spans 348 residues: MIKIAIDAMGGDYAPNAVIEGVEQARDLFEDTVFLLYGQRDVINAQLKNRDRIQIINADEVITMEDEPVRAVRRKKHSSIVMAAQAVKDGQADAFFSAGNSGAVLAAGLFIVGRIKGIDRPGLVTVLPVVRNANQSNFVMMDIGANADSKPLNLQQYGVLGTYYAERMMQAKHPRVALLNNGTEDDKGNKVHKAAFELLSQTDGINFVGNVESRDLLNGVADVVVTDGFTGNAVLKSIEGTARSMLGLVKDAVYNTGISGKLGGLLLKNGFNEIRSQMDYSQYGGAVLLGLKAPVVKTHGSSKAPTIVNTIRQIRQMVSTDIVPGVAEYFANQQANQQASVDIPAEND.

This sequence belongs to the PlsX family. As to quaternary structure, homodimer. Probably interacts with PlsY.

It localises to the cytoplasm. It catalyses the reaction a fatty acyl-[ACP] + phosphate = an acyl phosphate + holo-[ACP]. The protein operates within lipid metabolism; phospholipid metabolism. In terms of biological role, catalyzes the reversible formation of acyl-phosphate (acyl-PO(4)) from acyl-[acyl-carrier-protein] (acyl-ACP). This enzyme utilizes acyl-ACP as fatty acyl donor, but not acyl-CoA. This chain is Phosphate acyltransferase, found in Lactiplantibacillus plantarum (strain ATCC BAA-793 / NCIMB 8826 / WCFS1) (Lactobacillus plantarum).